We begin with the raw amino-acid sequence, 110 residues long: Nucleoid-associated protein Ent638_0951 (110 aa).

This sequence belongs to the YbaB/EbfC family. As to quaternary structure, homodimer.

It localises to the cytoplasm. It is found in the nucleoid. Binds to DNA and alters its conformation. May be involved in regulation of gene expression, nucleoid organization and DNA protection. The chain is Nucleoid-associated protein Ent638_0951 from Enterobacter sp. (strain 638).